The chain runs to 318 residues: MTSVIFLGTPEFAVPILEGLIAQHYDILAVMTQPDRKVGRKLRLAASPVKQAAQKHDIPVLQPEKLSGSPELAQAIAMAPDLIVTAAYGQFLPTKFLEAAKIIAVNVHGSLLPKYRGGAPIQYSIMNGDSETGVTIIEMVKKMDAGDMFAQAKLPLTRADDTGTVFAKLSLLGRDLLLETLPKIIAGTATRTPQDPDKVTFSPTITKEQEHLNIHLPAKALDQWIRALRPDVGGYVYLNGQRTKLWAITPLSAGSTLPAGSIVERDKHRLVMVAGQQTTFQVDELQPAGKAKQSIADFLNGPGQQLVSGQQVITDDPE.

110–113 (SLLP) contributes to the (6S)-5,6,7,8-tetrahydrofolate binding site.

The protein belongs to the Fmt family.

The catalysed reaction is L-methionyl-tRNA(fMet) + (6R)-10-formyltetrahydrofolate = N-formyl-L-methionyl-tRNA(fMet) + (6S)-5,6,7,8-tetrahydrofolate + H(+). Attaches a formyl group to the free amino group of methionyl-tRNA(fMet). The formyl group appears to play a dual role in the initiator identity of N-formylmethionyl-tRNA by promoting its recognition by IF2 and preventing the misappropriation of this tRNA by the elongation apparatus. The protein is Methionyl-tRNA formyltransferase of Lacticaseibacillus paracasei (strain ATCC 334 / BCRC 17002 / CCUG 31169 / CIP 107868 / KCTC 3260 / NRRL B-441) (Lactobacillus paracasei).